The sequence spans 158 residues: NAD(P)H-quinone oxidoreductase subunit J, chloroplastic (158 aa).

The protein belongs to the complex I 30 kDa subunit family. NDH is composed of at least 16 different subunits, 5 of which are encoded in the nucleus.

It localises to the plastid. Its subcellular location is the chloroplast thylakoid membrane. The enzyme catalyses a plastoquinone + NADH + (n+1) H(+)(in) = a plastoquinol + NAD(+) + n H(+)(out). The catalysed reaction is a plastoquinone + NADPH + (n+1) H(+)(in) = a plastoquinol + NADP(+) + n H(+)(out). Its function is as follows. NDH shuttles electrons from NAD(P)H:plastoquinone, via FMN and iron-sulfur (Fe-S) centers, to quinones in the photosynthetic chain and possibly in a chloroplast respiratory chain. The immediate electron acceptor for the enzyme in this species is believed to be plastoquinone. Couples the redox reaction to proton translocation, and thus conserves the redox energy in a proton gradient. The protein is NAD(P)H-quinone oxidoreductase subunit J, chloroplastic of Arabis hirsuta (Hairy rock-cress).